The sequence spans 248 residues: Anamorsin homolog (248 aa).

The interval 4-129 is N-terminal SAM-like domain; the sequence is FKGLQKSLYI…ETGSSARLSF (126 aa). The interval 130 to 161 is linker; it reads AKKNASAVNVWKISGDDEELIDEEELLDEEDK. Residues C172, C181, C184, and C186 each coordinate [2Fe-2S] cluster. The fe-S binding site A stretch occupies residues 172–186; that stretch reads CSTTGKRKACKNCSC. [4Fe-4S] cluster is bound by residues C209, C212, C220, and C223. Short sequence motifs (cx2C motif) lie at residues 209 to 212 and 220 to 223; these read CGNC and CSTC. The fe-S binding site B stretch occupies residues 209–223; the sequence is CGNCYLGDAFRCSTC.

It belongs to the anamorsin family. As to quaternary structure, monomer. [2Fe-2S] cluster is required as a cofactor. [4Fe-4S] cluster serves as cofactor.

It localises to the cytoplasm. The protein resides in the mitochondrion intermembrane space. Component of the cytosolic iron-sulfur (Fe-S) protein assembly (CIA) machinery. Required for the maturation of extramitochondrial Fe-S proteins. Part of an electron transfer chain functioning in an early step of cytosolic Fe-S biogenesis, facilitating the de novo assembly of a [4Fe-4S] cluster on the cytosolic Fe-S scaffold complex. Electrons are transferred from NADPH via a FAD- and FMN-containing diflavin oxidoreductase. Together with the diflavin oxidoreductase, also required for the assembly of the diferric tyrosyl radical cofactor of ribonucleotide reductase (RNR), probably by providing electrons for reduction during radical cofactor maturation in the catalytic small subunit. This Drosophila melanogaster (Fruit fly) protein is Anamorsin homolog.